We begin with the raw amino-acid sequence, 399 residues long: MKFILSVLALASFQHVFCDDVERAYAWRNISFVDTREGTYNPEDVIPTGVTHDAKTKKLYFGVPRLYPNIPYTLAEIDTNKYNSSEIRSPPFSKFNSQGGKEFTSIYQPVIDDCRRLWVLDVGEADYKKNGNEYPTKNPEIIAFDLNQEGNPEVHRYKLEGDVAKTPLGFGGFAVDVLNPNGNCATSDETYLYITNFIDNALIVYDMKNRNAWKINDDSFKPEPGKSVFNHKGEEYTYSVGIFGITLGDRDKDGHRLAYYLAGSSTKVYNVNTANLKKKVKSLKPTLLGERGYKTEAIALAYDPKTKVIFFAESDSRQVSCWNIQKDLKPENVGVIYTNAYFVFGTDIMVDADSTLWFMSNAHPPTKIPKLEFDKRQIRLMKVPTHRAIRNLPCEMRKA.

Positions 1-18 (MKFILSVLALASFQHVFC) are cleaved as a signal peptide. Residues asparagine 29 and asparagine 83 are each glycosylated (N-linked (GlcNAc...) asparagine).

The protein belongs to the major royal jelly protein family. In terms of tissue distribution, salivary gland (at protein level).

The protein resides in the secreted. Probably modulates blood feeding of sand flies on vertebrate species by binding and sequestering different mediators involved in the host response. Functions as a chemoattractant for host neutrophils; likely acts through a G-protein-coupled receptor and effect is dependent on calcium influx and phosphatidylinositol 3-kinases (PI3K) activity. Its function is as follows. (Microbial infection) Probably enhances infection caused by Leishmania species in the host through augmentation of host neutrophil recruitment into the skin. This chain is Yellow-related salivary protein M10, found in Phlebotomus duboscqi (Sandfly).